The following is a 143-amino-acid chain: MSKFIVYVKKSSEFATIPTRSSKKSAGYDLYSAYDYLVRPKSRVLVKTDICLSIPDECYGRIASRSGLSLNNSIDIGGGVIDGDYRGVIGVIFINNGNSPHYIKRGDRIAQIVFERLANVEIKEISNLDCTCRGDCGFGSSGI.

This sequence belongs to the dUTPase family. Requires Mg(2+) as cofactor.

It catalyses the reaction dUTP + H2O = dUMP + diphosphate + H(+). Functionally, this enzyme is involved in nucleotide metabolism: it produces dUMP, the immediate precursor of thymidine nucleotides and it decreases the intracellular concentration of dUTP so that uracil cannot be incorporated into DNA. This chain is Deoxyuridine 5'-triphosphate nucleotidohydrolase (DUT), found in Yaba monkey tumor virus (strain VR587) (YMTV).